We begin with the raw amino-acid sequence, 225 residues long: NAD(P)H-quinone oxidoreductase subunit K, chloroplastic (225 aa).

[4Fe-4S] cluster is bound by residues Cys43, Cys44, Cys108, and Cys139.

The protein belongs to the complex I 20 kDa subunit family. NDH is composed of at least 16 different subunits, 5 of which are encoded in the nucleus. [4Fe-4S] cluster serves as cofactor.

It is found in the plastid. The protein resides in the chloroplast thylakoid membrane. The enzyme catalyses a plastoquinone + NADH + (n+1) H(+)(in) = a plastoquinol + NAD(+) + n H(+)(out). The catalysed reaction is a plastoquinone + NADPH + (n+1) H(+)(in) = a plastoquinol + NADP(+) + n H(+)(out). Functionally, NDH shuttles electrons from NAD(P)H:plastoquinone, via FMN and iron-sulfur (Fe-S) centers, to quinones in the photosynthetic chain and possibly in a chloroplast respiratory chain. The immediate electron acceptor for the enzyme in this species is believed to be plastoquinone. Couples the redox reaction to proton translocation, and thus conserves the redox energy in a proton gradient. This Oryza nivara (Indian wild rice) protein is NAD(P)H-quinone oxidoreductase subunit K, chloroplastic.